The following is a 36-amino-acid chain: Delta-amaurobitoxin-Pl1c (36 aa).

Intrachain disulfides connect cysteine 3–cysteine 19, cysteine 10–cysteine 24, cysteine 18–cysteine 34, and cysteine 26–cysteine 32.

In terms of tissue distribution, expressed by the venom gland.

The protein localises to the secreted. In terms of biological role, binds at site 4 of sodium channels (Nav) and inhibits the fast inactivation of cockroach channels. This toxin is active only on insects. Has a potent activity against S.litura larvae. In Pireneitega luctuosa (Tangled nest spider), this protein is Delta-amaurobitoxin-Pl1c.